We begin with the raw amino-acid sequence, 154 residues long: Ribosome maturation factor RimP (154 aa).

It belongs to the RimP family.

It is found in the cytoplasm. Required for maturation of 30S ribosomal subunits. The polypeptide is Ribosome maturation factor RimP (Cyanothece sp. (strain PCC 7425 / ATCC 29141)).